The following is a 363-amino-acid chain: 3-isopropylmalate dehydrogenase (363 aa).

NAD(+) is bound at residue 79–92; that stretch reads GPKWEHLPPNDQPE. 4 residues coordinate substrate: Arg100, Arg110, Arg139, and Asp228. Mg(2+) contacts are provided by Asp228, Asp252, and Asp256. 286-298 provides a ligand contact to NAD(+); sequence GSAPDIAGKNIAN.

It belongs to the isocitrate and isopropylmalate dehydrogenases family. LeuB type 1 subfamily. As to quaternary structure, homodimer. Mg(2+) serves as cofactor. Requires Mn(2+) as cofactor.

Its subcellular location is the cytoplasm. The catalysed reaction is (2R,3S)-3-isopropylmalate + NAD(+) = 4-methyl-2-oxopentanoate + CO2 + NADH. It participates in amino-acid biosynthesis; L-leucine biosynthesis; L-leucine from 3-methyl-2-oxobutanoate: step 3/4. Its function is as follows. Catalyzes the oxidation of 3-carboxy-2-hydroxy-4-methylpentanoate (3-isopropylmalate) to 3-carboxy-4-methyl-2-oxopentanoate. The product decarboxylates to 4-methyl-2 oxopentanoate. This Vibrio vulnificus (strain YJ016) protein is 3-isopropylmalate dehydrogenase.